The chain runs to 155 residues: Fibroblast growth factor 1 (155 aa).

Position 2 is an N-acetylalanine (alanine 2). A propeptide spanning residues 2 to 15 (AEGETTTFRALTEK) is cleaved from the precursor. Asparagine 33 is a binding site for heparin. A heparin-binding region spans residues 127–143 (KKNGSSKLGPRTHFGQK).

It belongs to the heparin-binding growth factors family. Monomer. Homodimer. Interacts with FGFR1, FGFR2, FGFR3 and FGFR4. Affinity between fibroblast growth factors (FGFs) and their receptors is increased by heparan sulfate glycosaminoglycans that function as coreceptors. Found in a complex with FGFBP1, FGF1 and FGF2. Interacts with FGFBP1. Part of a Cu(2+)-dependent multiprotein aggregate containing FGF1, S100A13 and SYT1. Interacts with SYT1. Interacts with S100A13. Interacts with LRRC59. Interacts with CSNKA, CSNKB and FIBP. While binding with LRRC59, CSNKA and FIBP seem mutually exclusive, CSNKB and FIBP may cooperatively interact with FGF1. Forms a ternary complex with FGFR1 and ITGAV:ITGB3 and induces the recruitment of PTPN11 to the complex. In the nucleus, phosphorylated by PKC/PRKCD.

It is found in the secreted. Its subcellular location is the cytoplasm. The protein resides in the cell cortex. The protein localises to the cytosol. It localises to the nucleus. In terms of biological role, plays an important role in the regulation of cell survival, cell division, angiogenesis, cell differentiation and cell migration. Functions as a potent mitogen in vitro. Acts as a ligand for FGFR1 and integrins. Binds to FGFR1 in the presence of heparin leading to FGFR1 dimerization and activation via sequential autophosphorylation on tyrosine residues which act as docking sites for interacting proteins, leading to the activation of several signaling cascades. Binds to integrin ITGAV:ITGB3. Its binding to integrin, subsequent ternary complex formation with integrin and FGFR1, and the recruitment of PTPN11 to the complex are essential for FGF1 signaling. Induces the phosphorylation and activation of FGFR1, FRS2, MAPK3/ERK1, MAPK1/ERK2 and AKT1. Can induce angiogenesis. The sequence is that of Fibroblast growth factor 1 (FGF1) from Ovis aries (Sheep).